The sequence spans 63 residues: Large ribosomal subunit protein bL35 (63 aa).

It belongs to the bacterial ribosomal protein bL35 family.

This chain is Large ribosomal subunit protein bL35, found in Campylobacter jejuni subsp. jejuni serotype O:2 (strain ATCC 700819 / NCTC 11168).